Consider the following 649-residue polypeptide: Mitochondrial Rho GTPase 1 (649 aa).

At 1–623 (MTKETIRVVI…KPTNIDYSSA (623 aa)) the chain is on the cytoplasmic side. One can recognise a Miro 1 domain in the interval 3-176 (KETIRVVICG…FYLCQRSISY (174 aa)). GTP contacts are provided by residues 12-19 (GDDGVGKT), 61-63 (DTD), and 115-118 (NKCD). 2 EF-hand domains span residues 192 to 227 (SAVA…CFGK) and 320 to 355 (KGYR…TPGL). Positions 205, 207, 209, 216, 333, 335, 337, and 344 each coordinate Ca(2+). A Miro 2 domain is found at 436–601 (RKVFNCFVVG…FKKIIQASLE (166 aa)). Residues 445 to 452 (GKRNSGKS), 481 to 485 (EVTGD), and 550 to 553 (LKAD) contribute to the GTP site. A helical; Anchor for type IV membrane protein membrane pass occupies residues 624 to 644 (VILGSSIGFLALFSYTMIKLL). Topologically, residues 645–649 (KPTQQ) are mitochondrial intermembrane.

This sequence belongs to the mitochondrial Rho GTPase family.

It localises to the mitochondrion outer membrane. Functionally, mitochondrial GTPase involved in mitochondrial trafficking. Probably involved in control of anterograde transport of mitochondria and their subcellular distribution. In Candida glabrata (strain ATCC 2001 / BCRC 20586 / JCM 3761 / NBRC 0622 / NRRL Y-65 / CBS 138) (Yeast), this protein is Mitochondrial Rho GTPase 1 (GEM1).